Here is a 268-residue protein sequence, read N- to C-terminus: Undecaprenyl-diphosphatase (268 aa).

7 helical membrane-spanning segments follow: residues 43–63 (FWKT…LAIY), 85–105 (IGVL…GTFI), 108–128 (VLFN…VLLW), 141–161 (AMAF…AAMV), 184–204 (AAEF…VYDV), 217–237 (FIII…VKTF), and 246–266 (FTFF…ALAL).

The protein belongs to the UppP family.

It is found in the cell inner membrane. It catalyses the reaction di-trans,octa-cis-undecaprenyl diphosphate + H2O = di-trans,octa-cis-undecaprenyl phosphate + phosphate + H(+). In terms of biological role, catalyzes the dephosphorylation of undecaprenyl diphosphate (UPP). Confers resistance to bacitracin. The protein is Undecaprenyl-diphosphatase of Afipia carboxidovorans (strain ATCC 49405 / DSM 1227 / KCTC 32145 / OM5) (Oligotropha carboxidovorans).